The following is a 61-amino-acid chain: Small ribosomal subunit protein uS14B (61 aa).

Residues C24, C27, C40, and C43 each contribute to the Zn(2+) site.

It belongs to the universal ribosomal protein uS14 family. Zinc-binding uS14 subfamily. As to quaternary structure, part of the 30S ribosomal subunit. Contacts proteins S3 and S10. It depends on Zn(2+) as a cofactor.

Its function is as follows. Binds 16S rRNA, required for the assembly of 30S particles and may also be responsible for determining the conformation of the 16S rRNA at the A site. In Cutibacterium acnes (strain DSM 16379 / KPA171202) (Propionibacterium acnes), this protein is Small ribosomal subunit protein uS14B.